Here is a 455-residue protein sequence, read N- to C-terminus: Bifunctional protein GlmU (455 aa).

A pyrophosphorylase region spans residues 1 to 226 (MSLDIVILAA…PMEVQGANDR (226 aa)). UDP-N-acetyl-alpha-D-glucosamine-binding positions include 8 to 11 (LAAG), lysine 22, glutamine 73, 78 to 79 (GT), 99 to 101 (YGD), glycine 136, glutamate 151, asparagine 166, and asparagine 224. Mg(2+) is bound at residue aspartate 101. Asparagine 224 is a Mg(2+) binding site. The tract at residues 227–247 (RQLSELERHYQLREGRRLMAQ) is linker. The segment at 248-455 (GVTLRDPARF…WKRPEKIKKS (208 aa)) is N-acetyltransferase. 2 residues coordinate UDP-N-acetyl-alpha-D-glucosamine: arginine 330 and lysine 348. Residue histidine 360 is the Proton acceptor of the active site. Residues tyrosine 363 and asparagine 374 each contribute to the UDP-N-acetyl-alpha-D-glucosamine site. Acetyl-CoA is bound by residues alanine 377, 383-384 (NY), serine 402, alanine 420, and arginine 437.

This sequence in the N-terminal section; belongs to the N-acetylglucosamine-1-phosphate uridyltransferase family. The protein in the C-terminal section; belongs to the transferase hexapeptide repeat family. As to quaternary structure, homotrimer. Mg(2+) is required as a cofactor.

The protein resides in the cytoplasm. The enzyme catalyses alpha-D-glucosamine 1-phosphate + acetyl-CoA = N-acetyl-alpha-D-glucosamine 1-phosphate + CoA + H(+). It carries out the reaction N-acetyl-alpha-D-glucosamine 1-phosphate + UTP + H(+) = UDP-N-acetyl-alpha-D-glucosamine + diphosphate. Its pathway is nucleotide-sugar biosynthesis; UDP-N-acetyl-alpha-D-glucosamine biosynthesis; N-acetyl-alpha-D-glucosamine 1-phosphate from alpha-D-glucosamine 6-phosphate (route II): step 2/2. It participates in nucleotide-sugar biosynthesis; UDP-N-acetyl-alpha-D-glucosamine biosynthesis; UDP-N-acetyl-alpha-D-glucosamine from N-acetyl-alpha-D-glucosamine 1-phosphate: step 1/1. It functions in the pathway bacterial outer membrane biogenesis; LPS lipid A biosynthesis. Functionally, catalyzes the last two sequential reactions in the de novo biosynthetic pathway for UDP-N-acetylglucosamine (UDP-GlcNAc). The C-terminal domain catalyzes the transfer of acetyl group from acetyl coenzyme A to glucosamine-1-phosphate (GlcN-1-P) to produce N-acetylglucosamine-1-phosphate (GlcNAc-1-P), which is converted into UDP-GlcNAc by the transfer of uridine 5-monophosphate (from uridine 5-triphosphate), a reaction catalyzed by the N-terminal domain. The chain is Bifunctional protein GlmU from Pseudomonas entomophila (strain L48).